We begin with the raw amino-acid sequence, 179 residues long: Riboflavin kinase (179 aa).

61–66 (GDGEGR) is a CDP binding site. The Mg(2+) site is built by threonine 90 and asparagine 92. FMN contacts are provided by threonine 147 and glutamate 155. 160–163 (VELR) is a CDP binding site.

Belongs to the archaeal riboflavin kinase family. Requires Mg(2+) as cofactor.

It carries out the reaction riboflavin + CTP = CDP + FMN + H(+). It functions in the pathway cofactor biosynthesis; FMN biosynthesis; FMN from riboflavin (CTP route): step 1/1. Functionally, catalyzes the CTP-dependent phosphorylation of riboflavin (vitamin B2) to form flavin mononucleotide (FMN). The polypeptide is Riboflavin kinase (Ignicoccus hospitalis (strain KIN4/I / DSM 18386 / JCM 14125)).